A 70-amino-acid chain; its full sequence is DNA-directed RNA polymerase subunit omega (70 aa).

It belongs to the RNA polymerase subunit omega family. The RNAP catalytic core consists of 2 alpha, 1 beta, 1 beta' and 1 omega subunit. When a sigma factor is associated with the core the holoenzyme is formed, which can initiate transcription.

The catalysed reaction is RNA(n) + a ribonucleoside 5'-triphosphate = RNA(n+1) + diphosphate. Its function is as follows. Promotes RNA polymerase assembly. Latches the N- and C-terminal regions of the beta' subunit thereby facilitating its interaction with the beta and alpha subunits. The polypeptide is DNA-directed RNA polymerase subunit omega (Bacillus mycoides (strain KBAB4) (Bacillus weihenstephanensis)).